The sequence spans 204 residues: phospholipase A2 inhibitor and Ly6/PLAUR domain-containing protein (204 aa).

The N-terminal stretch at 1–26 is a signal peptide; sequence MRLSRRPETFLLAFVLLCTLLGLGCP. A UPAR/Ly6 domain is found at 27-117; that stretch reads LHCEICTAAG…NSAFLSVPLT (91 aa). 7 disulfide bridges follow: Cys-29–Cys-53, Cys-32–Cys-39, Cys-46–Cys-74, Cys-80–Cys-101, Cys-102–Cys-107, Cys-126–Cys-151, and Cys-144–Cys-172.

Belongs to the CNF-like-inhibitor family.

It is found in the secreted. The sequence is that of phospholipase A2 inhibitor and Ly6/PLAUR domain-containing protein (PINLYP) from Homo sapiens (Human).